A 785-amino-acid polypeptide reads, in one-letter code: Ribosome biogenesis protein BOP1 homolog (785 aa).

Basic residues predominate over residues 1–11 (MTKKLTIKRKV). The segment at 1 to 160 (MTKKLTIKRK…DSDTSDEEDI (160 aa)) is disordered. Composition is skewed to acidic residues over residues 45–54 (EDSTDDEGID), 61–73 (SSEDLEFESDEEG), and 85–102 (SGDDDEESAEDEEEEDDA). The segment covering 103–112 (DAKKSSKNND) has biased composition (basic and acidic residues). Residues 150–159 (ADSDTSDEED) are compositionally biased toward acidic residues. WD repeat units lie at residues 446–487 (GHTD…RTIE), 489–527 (EDVVRCVAWCPNAKLSIIAVATGSRLLLVNPKVGDKLLV), 571–613 (THFK…SQIP), 616–654 (KSKGLIQCVLFHPVKPCFFVATQHNIRIYDLVKQELIKK), 657–696 (TNSKWISGMSIHPKGDNLLVSTYDKKMLWFDLDLSTKPYQ), 700–739 (LHRNAVRSVAFHLRYPLFASGSDDQAVIVSHGMVYNDLLQ), and 755–785 (REEFGVLDVNWHPVQPWVFSTGADCTIRLFT).

It belongs to the WD repeat BOP1/ERB1 family.

The protein localises to the nucleus. It localises to the nucleolus. Its subcellular location is the nucleoplasm. In terms of biological role, required for maturation of ribosomal RNAs and formation of the large ribosomal subunit. The polypeptide is Ribosome biogenesis protein BOP1 homolog (Drosophila persimilis (Fruit fly)).